A 265-amino-acid polypeptide reads, in one-letter code: Undecaprenyl-diphosphatase (265 aa).

The next 8 helical transmembrane spans lie at 15-37 (GLTEFLPVSSTGHLIITGYLLEY), 41-61 (KAESFQVAIQLGAILAVVFLY), 85-105 (YLLALTSAPASVLGLLTHSFI), 109-129 (LFGPVTVAWALAAGALYILAV), 144-164 (VSPALALGIGMFQCLALWPGF), 183-203 (LAAEYSFVAAVPIMFAATGYD), 218-238 (FWAVGLLVSFASAWAAVKGFI), and 244-264 (VTFRPFAWYRLALAPVVLLFW).

This sequence belongs to the UppP family.

Its subcellular location is the cell inner membrane. It catalyses the reaction di-trans,octa-cis-undecaprenyl diphosphate + H2O = di-trans,octa-cis-undecaprenyl phosphate + phosphate + H(+). Catalyzes the dephosphorylation of undecaprenyl diphosphate (UPP). Confers resistance to bacitracin. This is Undecaprenyl-diphosphatase from Oleidesulfovibrio alaskensis (strain ATCC BAA-1058 / DSM 17464 / G20) (Desulfovibrio alaskensis).